Reading from the N-terminus, the 215-residue chain is Probable phosphoglycerate mutase GpmB (215 aa).

Substrate is bound by residues 8 to 15 (RHGETQWN), 21 to 22 (QG), Arg58, 82 to 85 (ELDM), 104 to 105 (RR), and 151 to 152 (GM). His9 acts as the Tele-phosphohistidine intermediate in catalysis. Glu82 (proton donor/acceptor) is an active-site residue.

It belongs to the phosphoglycerate mutase family. GpmB subfamily.

The catalysed reaction is (2R)-2-phosphoglycerate = (2R)-3-phosphoglycerate. It functions in the pathway carbohydrate degradation; glycolysis; pyruvate from D-glyceraldehyde 3-phosphate: step 3/5. The protein is Probable phosphoglycerate mutase GpmB of Cronobacter sakazakii (strain ATCC BAA-894) (Enterobacter sakazakii).